A 533-amino-acid chain; its full sequence is Glucans biosynthesis protein D (533 aa).

The segment at residues 1 to 28 is a signal peptide (tat-type signal); the sequence is MQRRHFLKNAAAALAALGLPALPPWALA.

Belongs to the OpgD/OpgG family. In terms of processing, predicted to be exported by the Tat system. The position of the signal peptide cleavage has not been experimentally proven.

Its subcellular location is the periplasm. The protein operates within glycan metabolism; osmoregulated periplasmic glucan (OPG) biosynthesis. Functionally, probably involved in the control of the structural glucose backbone of osmoregulated periplasmic glucans (OPGs). The polypeptide is Glucans biosynthesis protein D (Xanthomonas campestris pv. campestris (strain 8004)).